We begin with the raw amino-acid sequence, 953 residues long: Trafficking kinesin-binding protein 1 (953 aa).

The 308-residue stretch at 47 to 354 (LEEQLPHYKL…EELKNLRNKT (308 aa)) folds into the HAP1 N-terminal domain. A coiled-coil region spans residues 104–356 (QMTKTYNDID…LKNLRNKTMP (253 aa)). The tract at residues 359–509 (TSRRYHSLGL…RRLSLRRENY (151 aa)) is interaction with HGS. O-linked (GlcNAc) serine glycosylation occurs at Ser-447. Residues 472–495 (AADLGNDERSKKPGTPGTPGSHDL) are disordered. Positions 492 to 532 (SHDLETALRRLSLRRENYLSERRFFEEEQERKLQELAEKGE) form a coiled coil. The residue at position 537 (Ser-537) is a Phosphoserine. The interval 658–672 (PGKCMSQTNSTFTFT) is interaction with OGT. 2 O-linked (GlcNAc) serine glycosylation sites follow: Ser-680 and Ser-719. The residue at position 719 (Ser-719) is a Phosphoserine. Residues 777–796 (VIPSTPPNSPMQTPTSSPPS) form a disordered region. Low complexity predominate over residues 786-796 (PMQTPTSSPPS). Ser-919 is modified (phosphoserine). Thr-935 carries an O-linked (GlcNAc) threonine glycan.

The protein belongs to the milton family. As to quaternary structure, interacts with RHOT1 and RHOT2. Found in a complex with KIF5B, OGT, RHOT1 and RHOT2. Interacts with HGS. Interacts with GABRA1. Interacts with KIF5C. Interacts with OGT; stable interaction is not required for glycosylation of this protein by OGT. Isoform 1 interacts with OGT. O-glycosylated. Glycosylated by OGT; glycosylation in response to increased extracellular glucose levels is required for and leads to regulation of mitochondrial motility by OGT. High expression in spinal cord and moderate expression in all other tissues and specific brain regions examined. Expressed in all cell lines examined.

Its subcellular location is the cytoplasm. The protein resides in the nucleus. It localises to the mitochondrion. It is found in the early endosome. The protein localises to the endosome. Its subcellular location is the mitochondrion membrane. The protein resides in the cell cortex. Its function is as follows. Involved in the regulation of endosome-to-lysosome trafficking, including endocytic trafficking of EGF-EGFR complexes and GABA-A receptors. Involved in mitochondrial motility. When O-glycosylated, abolishes mitochondrial motility. Crucial for recruiting OGT to the mitochondrial surface of neuronal processes. TRAK1 and RHOT form an essential protein complex that links KIF5 to mitochondria for light chain-independent, anterograde transport of mitochondria. This chain is Trafficking kinesin-binding protein 1 (TRAK1), found in Homo sapiens (Human).